A 211-amino-acid polypeptide reads, in one-letter code: MSGILGKKIGMTQIFEDGKFVPVTVVEAGPNFVLQKKTEEKDGYVALQLGFDEKKEKNTTKPLMGIFNKAGVKPQRFVKELEVESVDGYELGQEIKVDVLTEVGYVDITGTSKGKGTSGVMKKHGFSGNRASHGVSRNHRLGGSIGMSSWPGKVLKGKKMAGQHGNATVTVQNLKVVKVDAEHNLLLIKGAVPGAKNSYLVIKPAVKKVIG.

The interval glycine 116–glycine 142 is disordered.

This sequence belongs to the universal ribosomal protein uL3 family. In terms of assembly, part of the 50S ribosomal subunit. Forms a cluster with proteins L14 and L19.

One of the primary rRNA binding proteins, it binds directly near the 3'-end of the 23S rRNA, where it nucleates assembly of the 50S subunit. The polypeptide is Large ribosomal subunit protein uL3 (Fusobacterium nucleatum subsp. nucleatum (strain ATCC 25586 / DSM 15643 / BCRC 10681 / CIP 101130 / JCM 8532 / KCTC 2640 / LMG 13131 / VPI 4355)).